The primary structure comprises 265 residues: Proline-rich protein 23B (265 aa).

A compositionally biased stretch (low complexity) spans 1–18 (MVSRPRSPSAFPAPWWGQ). 2 disordered regions span residues 1-49 (MVSR…EDPA) and 226-265 (PSSP…LFQA). Residues 226–237 (PSSPLQPLPPSP) show a composition bias toward pro residues. Over residues 256–265 (CKARRRLFQA) the composition is skewed to basic residues.

This sequence belongs to the PRR23 family.

This is Proline-rich protein 23B (PRR23B) from Homo sapiens (Human).